The following is a 999-amino-acid chain: Hypoxia up-regulated protein 1 (999 aa).

The N-terminal stretch at 1–32 is a signal peptide; it reads MAATVRRQRPRRLLCWALVAVLLADLLALSDT. Asparagine 155, asparagine 222, and asparagine 515 each carry an N-linked (GlcNAc...) asparagine glycan. The disordered stretch occupies residues 564–694; sequence VEDSPEEEST…KKQKPARKQK (131 aa). Serine 567 is modified (phosphoserine). Positions 574–583 are enriched in polar residues; that stretch reads LTKLGNTISS. A glycan (N-linked (GlcNAc...) asparagine) is linked at asparagine 596. 2 stretches are compositionally biased toward basic and acidic residues: residues 611-626 and 641-668; these read GSKD…KEEA and PKGD…KPNE. N-linked (GlcNAc...) asparagine glycosylation is found at asparagine 830, asparagine 862, and asparagine 869. Lysine 883 is modified (N6-acetyllysine). The interval 909–999 is disordered; the sequence is AKFTKPRPRP…QKRPLKNDEL (91 aa). N-linked (GlcNAc...) asparagine glycans are attached at residues asparagine 922 and asparagine 931. Residues 949–962 are compositionally biased toward basic and acidic residues; the sequence is EEAKAILEPDKEGL. Positions 996–999 match the Prevents secretion from ER motif; it reads NDEL.

Belongs to the heat shock protein 70 family. In terms of assembly, part of a large chaperone multiprotein complex comprising DNAJB11, HSP90B1, HSPA5, HYOU, PDIA2, PDIA4, PDIA6, PPIB, SDF2L1, UGGT1 and very small amounts of ERP29, but not, or at very low levels, CALR nor CANX. In terms of tissue distribution, selectively expressed by cultured astrocytes but not endothelial cells, microglia or neurons.

It is found in the endoplasmic reticulum lumen. In terms of biological role, has a pivotal role in cytoprotective cellular mechanisms triggered by oxygen deprivation. Promotes HSPA5/BiP-mediated ATP nucleotide exchange and thereby activates the unfolded protein response (UPR) pathway in the presence of endoplasmic reticulum stress. May play a role as a molecular chaperone and participate in protein folding. The protein is Hypoxia up-regulated protein 1 (Hyou1) of Rattus norvegicus (Rat).